Here is a 452-residue protein sequence, read N- to C-terminus: Flavin-containing monooxygenase FMO GS-OX-like 4 (452 aa).

17 to 22 (GAGAAG) provides a ligand contact to FAD. Position 217–222 (217–222 (GNSASA)) interacts with NADP(+).

The protein belongs to the FMO family. It depends on FAD as a cofactor.

In terms of biological role, catalyzes the conversion of methylthioalkyl glucosinolates of any chain length into methylsulfinylalkyl glucosinolates. This chain is Flavin-containing monooxygenase FMO GS-OX-like 4, found in Arabidopsis thaliana (Mouse-ear cress).